Reading from the N-terminus, the 103-residue chain is Co-chaperonin GroES (103 aa).

It belongs to the GroES chaperonin family. In terms of assembly, heptamer of 7 subunits arranged in a ring. Interacts with the chaperonin GroEL.

It is found in the cytoplasm. Functionally, together with the chaperonin GroEL, plays an essential role in assisting protein folding. The GroEL-GroES system forms a nano-cage that allows encapsulation of the non-native substrate proteins and provides a physical environment optimized to promote and accelerate protein folding. GroES binds to the apical surface of the GroEL ring, thereby capping the opening of the GroEL channel. The polypeptide is Co-chaperonin GroES (Prochlorococcus marinus (strain SARG / CCMP1375 / SS120)).